A 103-amino-acid chain; its full sequence is Large ribosomal subunit protein uL24 (103 aa).

The protein belongs to the universal ribosomal protein uL24 family. In terms of assembly, part of the 50S ribosomal subunit.

Functionally, one of two assembly initiator proteins, it binds directly to the 5'-end of the 23S rRNA, where it nucleates assembly of the 50S subunit. Its function is as follows. One of the proteins that surrounds the polypeptide exit tunnel on the outside of the subunit. The chain is Large ribosomal subunit protein uL24 from Glaesserella parasuis serovar 5 (strain SH0165) (Haemophilus parasuis).